The sequence spans 313 residues: Porphobilinogen deaminase (313 aa).

Position 242 is an S-(dipyrrolylmethanemethyl)cysteine (cysteine 242).

This sequence belongs to the HMBS family. Monomer. Dipyrromethane serves as cofactor.

It catalyses the reaction 4 porphobilinogen + H2O = hydroxymethylbilane + 4 NH4(+). It participates in porphyrin-containing compound metabolism; protoporphyrin-IX biosynthesis; coproporphyrinogen-III from 5-aminolevulinate: step 2/4. Functionally, tetrapolymerization of the monopyrrole PBG into the hydroxymethylbilane pre-uroporphyrinogen in several discrete steps. The chain is Porphobilinogen deaminase from Pseudomonas fluorescens (strain ATCC BAA-477 / NRRL B-23932 / Pf-5).